The following is a 528-amino-acid chain: Beta-galactoside alpha-2,6-sialyltransferase 2 (528 aa).

At 1 to 10 (MKPNLKQWKQ) the chain is on the cytoplasmic side. A helical; Signal-anchor for type II membrane protein transmembrane segment spans residues 11 to 31 (LMLFGIFAWGLLFLVIFIYFT). Residues 32 to 528 (DSNSAEPVPS…CPERNNFPPL (497 aa)) lie on the Lumenal side of the membrane. N-linked (GlcNAc...) asparagine glycans are attached at residues Asn167, Asn308, and Asn338. 3 disulfides stabilise this stretch: Cys254–Cys519, Cys297–Cys448, and Cys466–Cys477.

It belongs to the glycosyltransferase 29 family.

Its subcellular location is the golgi apparatus. The protein localises to the golgi stack membrane. It carries out the reaction a beta-D-galactoside + CMP-N-acetyl-beta-neuraminate = an N-acetyl-alpha-neuraminyl-(2-&gt;6)-beta-D-galactosyl derivative + CMP + H(+). In terms of biological role, transfers sialic acid from the donor of substrate CMP-sialic acid to galactose containing acceptor substrates. The sequence is that of Beta-galactoside alpha-2,6-sialyltransferase 2 (ST6GAL2) from Gallus gallus (Chicken).